The primary structure comprises 139 residues: Transcription antitermination protein NusB (139 aa).

Belongs to the NusB family.

In terms of biological role, involved in transcription antitermination. Required for transcription of ribosomal RNA (rRNA) genes. Binds specifically to the boxA antiterminator sequence of the ribosomal RNA (rrn) operons. The protein is Transcription antitermination protein NusB of Nitratiruptor sp. (strain SB155-2).